A 30-amino-acid polypeptide reads, in one-letter code: Ranatuerin-2OK (30 aa).

Cysteine 23 and cysteine 30 are oxidised to a cystine.

As to expression, expressed by the skin glands.

It is found in the secreted. Its function is as follows. Antimicrobial peptide. Active against Gram-negative bacterium E.coli (MIC=12.5 uM) and against Gram-positive bacterium S.aureus (MIC=50 uM). In Nidirana okinavana (Kampira Falls frog), this protein is Ranatuerin-2OK.